We begin with the raw amino-acid sequence, 560 residues long: Protein tweety homolog 3 (560 aa).

Topologically, residues 1 to 43 (MAAVVNYSPPWWVNLFHRLPHFNLQFQQTSSDFRPDDSDYQKA) are extracellular. Residues 44–64 (VLLLGAAALVCLALDLLFLLF) traverse the membrane as a helical segment. Topologically, residues 65-87 (YSFWLCCCRRKNHDSPNADCCCT) are cytoplasmic. Residues 88–108 (AWCVIIATLVCSAGIAVGFYG) traverse the membrane as a helical segment. At 109 to 212 (NGETCDGVTR…TEQYDWYRWL (104 aa)) the chain is on the extracellular side. Residues glutamate 111 and aspartate 114 each contribute to the Ca(2+) site. Asparagine 127 and asparagine 145 each carry an N-linked (GlcNAc...) asparagine glycan. The helical transmembrane segment at 213–233 (GYLGLLLFDVIICLLVLVGLI) threads the bilayer. Residues 234–238 (RNSRS) lie on the Cytoplasmic side of the membrane. Residues 239-259 (ILIGVCFLGVLTLVISWASLG) traverse the membrane as a helical segment. At 260–387 (LEFSFAVGAS…LTGLCYDGVE (128 aa)) the chain is on the extracellular side. Disulfide bonds link cysteine 272–cysteine 382 and cysteine 300–cysteine 367. A glycan (N-linked (GlcNAc...) asparagine) is linked at asparagine 352. The helical transmembrane segment at 388–408 (GLIYLVLFSFVTALMFSSIVC) threads the bilayer. At 409–560 (SVPHTWQSKR…AIHRPHSAIH (152 aa)) the chain is on the cytoplasmic side. 2 disordered regions span residues 415–435 (QSKRSEEEDGDETSATLGSRA) and 486–560 (TPRC…SAIH). Residues 539-549 (TSRSAPNSRPN) show a composition bias toward polar residues.

It belongs to the tweety family. In terms of assembly, homotetramer; disulfide-linked. Forms cis-homodimers in the presence of Ca(2+).

The protein localises to the cell membrane. It catalyses the reaction chloride(in) = chloride(out). The catalysed reaction is L-glutamate(out) = L-glutamate(in). Its function is as follows. May act as a calcium-independent, swelling-dependent volume-regulated anion channel (VRAC-swell) which plays a pivotal role in the process of regulatory volume decrease (RVD) in the brain through the efflux of anions like chloride and organic osmolytes like glutamate. Probable large-conductance Ca(2+)-activated chloride channel. This is Protein tweety homolog 3 (ttyh3b) from Danio rerio (Zebrafish).